The chain runs to 267 residues: Tryptophan synthase alpha chain (267 aa).

Catalysis depends on proton acceptor residues E47 and D58.

Belongs to the TrpA family. As to quaternary structure, tetramer of two alpha and two beta chains.

It catalyses the reaction (1S,2R)-1-C-(indol-3-yl)glycerol 3-phosphate + L-serine = D-glyceraldehyde 3-phosphate + L-tryptophan + H2O. It functions in the pathway amino-acid biosynthesis; L-tryptophan biosynthesis; L-tryptophan from chorismate: step 5/5. Functionally, the alpha subunit is responsible for the aldol cleavage of indoleglycerol phosphate to indole and glyceraldehyde 3-phosphate. This Chlorobium chlorochromatii (strain CaD3) protein is Tryptophan synthase alpha chain.